The following is a 647-amino-acid chain: Threonine--tRNA ligase (647 aa).

The TGS domain occupies methionine 1–threonine 61. Residues aspartate 242–proline 540 are catalytic. Zn(2+) is bound by residues cysteine 336, histidine 387, and histidine 517.

It belongs to the class-II aminoacyl-tRNA synthetase family. In terms of assembly, homodimer. It depends on Zn(2+) as a cofactor.

It is found in the cytoplasm. It carries out the reaction tRNA(Thr) + L-threonine + ATP = L-threonyl-tRNA(Thr) + AMP + diphosphate + H(+). Catalyzes the attachment of threonine to tRNA(Thr) in a two-step reaction: L-threonine is first activated by ATP to form Thr-AMP and then transferred to the acceptor end of tRNA(Thr). Also edits incorrectly charged L-seryl-tRNA(Thr). The chain is Threonine--tRNA ligase from Streptococcus pneumoniae (strain JJA).